Consider the following 60-residue polypeptide: Large ribosomal subunit protein bL32 (60 aa).

Over residues 1 to 23 the composition is skewed to basic residues; that stretch reads MAKHPVPKKKTSKSKRDMRRSHH. Residues 1–26 are disordered; the sequence is MAKHPVPKKKTSKSKRDMRRSHHALV.

Belongs to the bacterial ribosomal protein bL32 family.

The protein is Large ribosomal subunit protein bL32 of Deinococcus geothermalis (strain DSM 11300 / CIP 105573 / AG-3a).